Reading from the N-terminus, the 171-residue chain is 16S rRNA aminocarboxypropyltransferase (171 aa).

Positions 17, 67, 90, and 109 each coordinate S-adenosyl-L-methionine.

Belongs to the TDD superfamily. TSR3 family.

The protein resides in the cytoplasm. The enzyme catalyses an N(1)-methylpseudouridine in rRNA + S-adenosyl-L-methionine = N(1)-methyl-N(3)-[(3S)-3-amino-3-carboxypropyl]pseudouridine in rRNA + S-methyl-5'-thioadenosine + H(+). Functionally, aminocarboxypropyltransferase that catalyzes the aminocarboxypropyl transfer on pseudouridine corresponding to position 914 in M.jannaschii 16S rRNA. It constitutes the last step in biosynthesis of the hypermodified N1-methyl-N3-(3-amino-3-carboxypropyl) pseudouridine (m1acp3-Psi). The protein is 16S rRNA aminocarboxypropyltransferase of Methanobrevibacter smithii (strain ATCC 35061 / DSM 861 / OCM 144 / PS).